A 134-amino-acid chain; its full sequence is Profilin-2 (134 aa).

Residues Cys-13 and Cys-118 are joined by a disulfide bond. The Involved in PIP2 interaction signature appears at 84-100; sequence AVIRGKKGSGGITIKKT. At Thr-114 the chain carries Phosphothreonine.

The protein belongs to the profilin family. As to quaternary structure, occurs in many kinds of cells as a complex with monomeric actin in a 1:1 ratio. In terms of processing, phosphorylated by MAP kinases.

The protein resides in the cytoplasm. It is found in the cytoskeleton. Its function is as follows. Binds to actin and affects the structure of the cytoskeleton. At high concentrations, profilin prevents the polymerization of actin, whereas it enhances it at low concentrations. The chain is Profilin-2 from Olea europaea (Common olive).